The following is an 80-amino-acid chain: Exodeoxyribonuclease 7 small subunit (80 aa).

The protein belongs to the XseB family. Heterooligomer composed of large and small subunits.

It localises to the cytoplasm. The enzyme catalyses Exonucleolytic cleavage in either 5'- to 3'- or 3'- to 5'-direction to yield nucleoside 5'-phosphates.. In terms of biological role, bidirectionally degrades single-stranded DNA into large acid-insoluble oligonucleotides, which are then degraded further into small acid-soluble oligonucleotides. The polypeptide is Exodeoxyribonuclease 7 small subunit (Rickettsia canadensis (strain McKiel)).